A 514-amino-acid polypeptide reads, in one-letter code: G-protein coupled receptor Mth (514 aa).

An N-terminal signal peptide occupies residues 1–24; sequence MKTLLVLRISTVILVVLVIQKSYA. Topologically, residues 25 to 218 are extracellular; the sequence is DILECDYFDT…CLIVPSITGQ (194 aa). 5 cysteine pairs are disulfide-bonded: Cys29/Cys83, Cys85/Cys90, Cys94/Cys188, Cys95/Cys106, and Cys150/Cys209. N-linked (GlcNAc...) asparagine glycosylation is present at Asn45. N-linked (GlcNAc...) asparagine glycans are attached at residues Asn109, Asn123, Asn170, and Asn198. The helical transmembrane segment at 219-239 threads the bilayer; that stretch reads TVVMISSLICMVLTIAVYLFV. Residues 240–248 lie on the Cytoplasmic side of the membrane; sequence KKLQNLHGK. A helical membrane pass occupies residues 249–269; it reads CFICYMVCLFMGYLFLLLDLW. At 270 to 278 the chain is on the extracellular side; it reads QISISFCKP. The chain crosses the membrane as a helical span at residues 279 to 299; it reads AGFLGYFFVMAAFFWLSVISL. Over 300 to 320 the chain is Cytoplasmic; that stretch reads HLWNTFRGSSHKANRFLFEHR. A helical transmembrane segment spans residues 321–341; the sequence is FLAYNTYAWGMAVVLTGITVL. At 342–370 the chain is on the extracellular side; the sequence is ADNIVENQDWNPRVGHEGHCWIYTQAWSA. Residues 371–391 traverse the membrane as a helical segment; that stretch reads MLYFYGPMVFLIAFNITMFIL. At 392–424 the chain is on the cytoplasmic side; the sequence is TAKRILGVKKDIQNFAHRQERKQKLNSDKQTYT. Residues 425–445 form a helical membrane-spanning segment; that stretch reads FFLRLFIIMGLSWSLEIGSYF. At 446-454 the chain is on the extracellular side; it reads SQSNQTWAN. N-linked (GlcNAc...) asparagine glycosylation occurs at Asn449. Residues 455-475 traverse the membrane as a helical segment; the sequence is VFLVADYLNWSQGIIIFILFV. Over 476-514 the chain is Cytoplasmic; the sequence is LKRSTWRLLQESIRGEGEEVNNSEEEISLENTTTRNVLL.

Belongs to the G-protein coupled receptor 2 family. Mth subfamily. Homodimer.

The protein resides in the cell membrane. Functionally, involved in biological aging and stress response. Essential for adult survival. Required in the presynaptic motor neuron to up-regulate neurotransmitter exocytosis at larval glutamatergic neuromuscular junctions (NMJs). Regulates a step associated with docking and clustering of vesicles at release sites. SP/Acp70A and sun are agonists that activate mth in vitro. The chain is G-protein coupled receptor Mth (mth) from Drosophila melanogaster (Fruit fly).